The primary structure comprises 459 residues: Sperm-tail PG-rich repeat-containing protein 2 (459 aa).

STPGR repeat units lie at residues 21–30 (VGPGSYQVPF), 63–73 (PGPGHYNVSEA), 119–148 (TLGP…NSSG), 157–203 (GPGP…QEKK), 213–243 (TPAP…FGQS), 257–268 (PGPGFYNVLNNT), 351–377 (PAPG…PRSL), 400–410 (GPGPAAYNPVL), and 433–443 (TPGPATYEISQ).

In Homo sapiens (Human), this protein is Sperm-tail PG-rich repeat-containing protein 2 (STPG2).